Reading from the N-terminus, the 173-residue chain is Crossover junction endodeoxyribonuclease RuvC (173 aa).

Active-site residues include D8, E67, and D139. Mg(2+) is bound by residues D8, E67, and D139.

The protein belongs to the RuvC family. In terms of assembly, homodimer which binds Holliday junction (HJ) DNA. The HJ becomes 2-fold symmetrical on binding to RuvC with unstacked arms; it has a different conformation from HJ DNA in complex with RuvA. In the full resolvosome a probable DNA-RuvA(4)-RuvB(12)-RuvC(2) complex forms which resolves the HJ. Mg(2+) serves as cofactor.

The protein localises to the cytoplasm. It catalyses the reaction Endonucleolytic cleavage at a junction such as a reciprocal single-stranded crossover between two homologous DNA duplexes (Holliday junction).. The RuvA-RuvB-RuvC complex processes Holliday junction (HJ) DNA during genetic recombination and DNA repair. Endonuclease that resolves HJ intermediates. Cleaves cruciform DNA by making single-stranded nicks across the HJ at symmetrical positions within the homologous arms, yielding a 5'-phosphate and a 3'-hydroxyl group; requires a central core of homology in the junction. The consensus cleavage sequence is 5'-(A/T)TT(C/G)-3'. Cleavage occurs on the 3'-side of the TT dinucleotide at the point of strand exchange. HJ branch migration catalyzed by RuvA-RuvB allows RuvC to scan DNA until it finds its consensus sequence, where it cleaves and resolves the cruciform DNA. In Pseudoalteromonas atlantica (strain T6c / ATCC BAA-1087), this protein is Crossover junction endodeoxyribonuclease RuvC.